The sequence spans 127 residues: Secreted RxLR effector protein 3 (127 aa).

The signal sequence occupies residues 1-20; that stretch reads MRPPLLLFLTVTVLVSCASA. The RxLR-dEER signature appears at 30 to 48; sequence RSLRSIKTTTNDDAAEEER.

It belongs to the RxLR effector family.

It is found in the secreted. Its subcellular location is the host cell. In terms of biological role, secreted effector that partially suppresses elicitor-induced cell death in host and enhances virulence of P.parasitica. The sequence is that of Secreted RxLR effector protein 3 from Phytophthora nicotianae (Potato buckeye rot agent).